A 271-amino-acid chain; its full sequence is Norsolorinic acid ketoreductase (271 aa).

The tract at residues Met-1 to Pro-22 is disordered. Residues Ile-36, Asn-112, Tyr-185, Lys-189, Val-216, and Thr-218 each contribute to the NADP(+) site. Catalysis depends on Tyr-185, which acts as the Proton donor. Lys-189 serves as the catalytic Lowers pKa of active site Tyr.

The protein belongs to the short-chain dehydrogenases/reductases (SDR) family.

The protein localises to the cytoplasm. It is found in the cytosol. It localises to the vacuole. It catalyses the reaction (1'S)-averantin + NADP(+) = norsolorinic acid + NADPH + H(+). Its pathway is mycotoxin biosynthesis; aflatoxin biosynthesis. Norsolorinic acid ketoreductase; part of the gene cluster that mediates the biosynthesis of aflatoxins, a group of polyketide-derived furanocoumarins, and part of the most toxic and carcinogenic compounds among the known mycotoxins. The four major aflatoxins produced by A.parasiticus are aflatoxin B1 (AFB1), aflatoxin B2 (AFB2), aflatoxin G1 (AFG1) and aflatoxin G2 (AFG2). Within the aflatoxin pathway, the norsolorinic acid ketoreductase aflD performs the second step by catalyzing the dehydration of norsolorinic acid (NOR) to form (1'S)-averantin (AVN). The biosynthesis of aflatoxins begins with the norsolorinic acid synthase aflC that combines a hexanoyl starter unit produced by the fatty acid synthase aflA/aflB and 7 malonyl-CoA extender units to synthesize the precursor NOR. The second step is the conversion of NOR to averantin and requires the norsolorinic acid ketoreductase aflD, which catalyzes the dehydration of norsolorinic acid to form (1'S)-averantin. The norsolorinic acid reductases aflE and aflF may also play a role in the conversion of NOR to AVN. The cytochrome P450 monooxygenase aflG then catalyzes the hydroxylation of AVN to 5'hydroxyaverantin (HAVN). The next step is performed by the 5'-hydroxyaverantin dehydrogenase aflH that transforms HAVN to 5'-oxoaverantin (OAVN) which is further converted to averufin (AVF) by aflK that plays a dual role in the pathway, as a 5'-oxoaverantin cyclase that mediates conversion of 5'-oxoaverantin, as well as a versicolorin B synthase in a later step in the pathway. The averufin oxidase aflI catalyzes the conversion of AVF to versiconal hemiacetal acetate (VHA). VHA is then the substrate for the versiconal hemiacetal acetate esterase aflJ to yield versiconal (VAL). Versicolorin B synthase aflK then converts VAL to versicolorin B (VERB) by closing the bisfuran ring of aflatoxin which is required for DNA-binding, thus giving to aflatoxin its activity as a mutagen. Then, the activity of the versicolorin B desaturase aflL leads to versicolorin A (VERA). A branch point starts from VERB since it can also be converted to dihydrodemethylsterigmatocystin (DMDHST), probably also by aflL, VERA being a precursor for aflatoxins B1 and G1, and DMDHST for aflatoxins B2 and G2. Next, the versicolorin reductase aflM and the cytochrome P450 monooxygenase aflN are involved in conversion of VERA to demethylsterigmatocystin (DMST). AflX and aflY seem also involved in this step, through probable aflX-mediated epoxide ring-opening step following versicolorin A oxidation and aflY-mediated Baeyer-Villiger oxidation required for the formation of the xanthone ring. The methyltransferase aflO then leads to the modification of DMST to sterigmatocystin (ST), and of DMDHST to dihydrosterigmatocystin (DHST). Both ST and DHST are then substrates of the O-methyltransferase aflP to yield O-methylsterigmatocystin (OMST) and dihydro-O-methylsterigmatocystin (DHOMST), respectively. Finally OMST is converted to aflatoxins B1 and G1, and DHOMST to aflatoxins B2 and G2, via the action of several enzymes including O-methylsterigmatocystin oxidoreductase aflQ, the cytochrome P450 monooxygenase aflU, but also the NADH-dependent flavin oxidoreductase nadA which is specifically required for the synthesis of AFG1. This is Norsolorinic acid ketoreductase from Aspergillus parasiticus (strain ATCC 56775 / NRRL 5862 / SRRC 143 / SU-1).